Consider the following 789-residue polypeptide: Spermatogenesis-associated protein 20 (789 aa).

Over residues 1-19 the composition is skewed to basic residues; sequence MSHHSPPPPKHKGEHKGHG. Residues 1–65 form a disordered region; it reads MSHHSPPPPK…CPPPAPQKTA (65 aa). Residues Ser5 and Ser652 each carry the phosphoserine modification.

As to expression, testis-specific and age-dependent (at protein level). Highly expressed. Expressed in round spermatids located in the inner half-layer of the seminiferous epithelium as well as in early elongated spermatids having cytoplasmic protrusions into the tubular lumen.

Its subcellular location is the secreted. Its function is as follows. May play a role in fertility regulation. The chain is Spermatogenesis-associated protein 20 (Spata20) from Rattus norvegicus (Rat).